A 177-amino-acid chain; its full sequence is Peptide methionine sulfoxide reductase MsrA (177 aa).

Cys15 is an active-site residue.

Belongs to the MsrA Met sulfoxide reductase family.

It catalyses the reaction L-methionyl-[protein] + [thioredoxin]-disulfide + H2O = L-methionyl-(S)-S-oxide-[protein] + [thioredoxin]-dithiol. The catalysed reaction is [thioredoxin]-disulfide + L-methionine + H2O = L-methionine (S)-S-oxide + [thioredoxin]-dithiol. Has an important function as a repair enzyme for proteins that have been inactivated by oxidation. Catalyzes the reversible oxidation-reduction of methionine sulfoxide in proteins to methionine. The protein is Peptide methionine sulfoxide reductase MsrA of Listeria welshimeri serovar 6b (strain ATCC 35897 / DSM 20650 / CCUG 15529 / CIP 8149 / NCTC 11857 / SLCC 5334 / V8).